The following is a 300-amino-acid chain: MLANSLKSFFSSTRKTTQLKNMIQSKDLSFIMEAHNGLSAAIVEETGFKGIWGSGLSISAAMGVRDSNEASYTQVLEVLEFMSDRTKIPILLDGDTGYGNYNNARRLVKKLEQRSIAGVCLEDKIFPKRNSLLDDGRQELAPINEFVAKIKACKDTQQDADFQVVARVEAFIAGWGLEEALKRAEAYRNAGADAILMHSKLKEPSEIEAFMKEWKNRSPVIIVPTNYHTVPTDTFRKWGVNMVIWANHNMRACVSAMQETSRRIYEDESLVNVEPKVAKVKEVFRLQGEDELKQADKKYL.

Residues 1 to 10 (MLANSLKSFF) constitute a propeptide that is removed on maturation. Asp66 (nucleophile) is an active-site residue.

The protein belongs to the isocitrate lyase/PEP mutase superfamily. PEP mutase family.

The catalysed reaction is phosphoenolpyruvate + H(+) = 3-phosphonopyruvate. The protein operates within phosphorus metabolism; phosphonate biosynthesis. In terms of biological role, formation of a carbon-phosphorus bond by converting phosphoenolpyruvate (PEP) to phosphonopyruvate (P-Pyr). This Tetrahymena pyriformis protein is Phosphoenolpyruvate phosphomutase (PEPM).